The following is a 972-amino-acid chain: Protein NRDE2 homolog (972 aa).

Residues 1 to 17 show a composition bias toward polar residues; it reads MPSNHNTSVPKFSSFNS. The segment at 1–61 is disordered; the sequence is MPSNHNTSVP…RSIQSNFAVD (61 aa). Basic residues predominate over residues 19–33; the sequence is KAKKNPITKSNKKYR. The segment covering 37 to 59 has biased composition (polar residues); that stretch reads DQVSSNHAKSSFPSHRSIQSNFA. HAT repeat units lie at residues 159 to 191, 250 to 282, 318 to 350, 355 to 386, 608 to 640, 788 to 820, and 860 to 894; these read LNIL…YQER, WSKE…YFTG, TDVT…YELA, QANM…FWNS, EEKP…LEHL, YNLP…FESK, and TNSQ…ILNL. S970 carries the phosphoserine modification.

Belongs to the NRDE2 family.

It localises to the nucleus. This Schizosaccharomyces pombe (strain 972 / ATCC 24843) (Fission yeast) protein is Protein NRDE2 homolog.